Here is a 488-residue protein sequence, read N- to C-terminus: UDP-N-acetylmuramoyl-L-alanyl-D-glutamate--2,6-diaminopimelate ligase (488 aa).

Serine 31 serves as a coordination point for UDP-N-acetyl-alpha-D-muramoyl-L-alanyl-D-glutamate. 109–115 contributes to the ATP binding site; it reads GTNGKTS. Residues asparagine 150, 151–152, serine 178, and arginine 186 contribute to the UDP-N-acetyl-alpha-D-muramoyl-L-alanyl-D-glutamate site; that span reads TT. Lysine 218 bears the N6-carboxylysine mark. Meso-2,6-diaminopimelate-binding positions include arginine 384, 408 to 411, glycine 458, and glutamate 462; that span reads DNPR. Residues 408–411 carry the Meso-diaminopimelate recognition motif motif; it reads DNPR.

Belongs to the MurCDEF family. MurE subfamily. It depends on Mg(2+) as a cofactor. Carboxylation is probably crucial for Mg(2+) binding and, consequently, for the gamma-phosphate positioning of ATP.

Its subcellular location is the cytoplasm. The enzyme catalyses UDP-N-acetyl-alpha-D-muramoyl-L-alanyl-D-glutamate + meso-2,6-diaminopimelate + ATP = UDP-N-acetyl-alpha-D-muramoyl-L-alanyl-gamma-D-glutamyl-meso-2,6-diaminopimelate + ADP + phosphate + H(+). It functions in the pathway cell wall biogenesis; peptidoglycan biosynthesis. Its function is as follows. Catalyzes the addition of meso-diaminopimelic acid to the nucleotide precursor UDP-N-acetylmuramoyl-L-alanyl-D-glutamate (UMAG) in the biosynthesis of bacterial cell-wall peptidoglycan. This chain is UDP-N-acetylmuramoyl-L-alanyl-D-glutamate--2,6-diaminopimelate ligase, found in Bacillus licheniformis (strain ATCC 14580 / DSM 13 / JCM 2505 / CCUG 7422 / NBRC 12200 / NCIMB 9375 / NCTC 10341 / NRRL NRS-1264 / Gibson 46).